We begin with the raw amino-acid sequence, 367 residues long: MKLSIDISELIQLGKKMLPEGVDFFLDESPIDFDPIDIELSTGKEVSIEDLDPGSGLISYHGRQVLLYIRDHSGRYDAAIVDGEKGKRFHIAWCRTLDEMRHKNRFERYHATNRIDGLFEIDDGSGRSQDVDLRVCMNCLERLNYKGSIDKQRKREIFKSFSLNEFFSDYSTCFRHMPKGIYDKTNSGYVENWKEISKEIREKANYVCNDCGVNLSTAKNLCHVHHKNGIKYDNHHENLLVLCKDCHRKQPLHEGIFVTQAEMAIIQRLRSQQGLLKAESWNEIYDLTDPSVHGDINMMQHKGFQPPVPGLDLQNSEHEIIATVEAAWPGLKIAVNLTPAEVEGWRIYTVGELVKEIQTGAFTPAKL.

In terms of biological role, component of antiviral defense system Zorya type II, composed of ZorA, ZorB and ZorE. Expression of Zorya type II in E.coli (strain MG1655) confers resistance to phages SECphi7 and T7. While most T7 infected Zorya-containing cells undergo abortive infection, a minority produce viable phage progeny. These eventually accumulate to a high multiplicity of infection, leading to culture collapse by 170 minutes after initial infection. ZorA and ZorB probably assemble in the cell inner membrane and exert their effect there. This may be a nuclease. The chain is Zorya protein ZorE from Escherichia coli (strain ATCC 8739 / DSM 1576 / NBRC 3972 / NCIMB 8545 / WDCM 00012 / Crooks).